A 1072-amino-acid polypeptide reads, in one-letter code: Carbamoyl phosphate synthase large chain (1072 aa).

Residues 1 to 401 (MPKRLDINTI…SLLKAVRSLE (401 aa)) are carboxyphosphate synthetic domain. The ATP site is built by Arg129, Arg169, Gly175, Gly176, Lys208, Ile210, Glu215, Gly241, Val242, His243, Gln284, and Glu298. The 195-residue stretch at 133–327 (RTLMQELNEP…IAKLAAKIAV (195 aa)) folds into the ATP-grasp 1 domain. Gln284, Glu298, and Asn300 together coordinate Mg(2+). Residues Gln284, Glu298, and Asn300 each coordinate Mn(2+). Residues 402-546 (LGIYHLELDH…YSTYADENES (145 aa)) are oligomerization domain. A carbamoyl phosphate synthetic domain region spans residues 547-929 (IVTDRKSVVV…ALYKGLVASG (383 aa)). One can recognise an ATP-grasp 2 domain in the interval 671 to 861 (EAALTKLGIP…MANVATKVIL (191 aa)). Arg707, Arg746, Glu752, Gly777, Val778, His779, Ser780, Gln820, and Glu832 together coordinate ATP. Positions 820, 832, and 834 each coordinate Mg(2+). Mn(2+)-binding residues include Gln820, Glu832, and Asn834. The MGS-like domain maps to 930-1072 (INIPTHGSVI…QTKRHEVVHA (143 aa)). The interval 930–1072 (INIPTHGSVI…QTKRHEVVHA (143 aa)) is allosteric domain.

This sequence belongs to the CarB family. In terms of assembly, composed of two chains; the small (or glutamine) chain promotes the hydrolysis of glutamine to ammonia, which is used by the large (or ammonia) chain to synthesize carbamoyl phosphate. Tetramer of heterodimers (alpha,beta)4. It depends on Mg(2+) as a cofactor. The cofactor is Mn(2+).

The catalysed reaction is hydrogencarbonate + L-glutamine + 2 ATP + H2O = carbamoyl phosphate + L-glutamate + 2 ADP + phosphate + 2 H(+). The enzyme catalyses hydrogencarbonate + NH4(+) + 2 ATP = carbamoyl phosphate + 2 ADP + phosphate + 2 H(+). It functions in the pathway amino-acid biosynthesis; L-arginine biosynthesis; carbamoyl phosphate from bicarbonate: step 1/1. It participates in pyrimidine metabolism; UMP biosynthesis via de novo pathway; (S)-dihydroorotate from bicarbonate: step 1/3. Functionally, large subunit of the glutamine-dependent carbamoyl phosphate synthetase (CPSase). CPSase catalyzes the formation of carbamoyl phosphate from the ammonia moiety of glutamine, carbonate, and phosphate donated by ATP, constituting the first step of 2 biosynthetic pathways, one leading to arginine and/or urea and the other to pyrimidine nucleotides. The large subunit (synthetase) binds the substrates ammonia (free or transferred from glutamine from the small subunit), hydrogencarbonate and ATP and carries out an ATP-coupled ligase reaction, activating hydrogencarbonate by forming carboxy phosphate which reacts with ammonia to form carbamoyl phosphate. In Bacillus cereus (strain AH820), this protein is Carbamoyl phosphate synthase large chain.